We begin with the raw amino-acid sequence, 120 residues long: Host cell factor C1 regulator 1 (120 aa).

The disordered stretch occupies residues 1–30 (MILQQPLERGPPSRDPRATTGVTRGLNASL). Over residues 20 to 30 (TGVTRGLNASL) the composition is skewed to polar residues. An interaction with HCFC1 region spans residues 58-61 (DHPY). Positions 92 to 101 (IPEALRLLRL) match the Nuclear export signal motif.

Interacts with HCFC1.

The protein localises to the cytoplasm. The protein resides in the nucleus. Functionally, regulates HCFC1 activity by modulating its subcellular localization. Overexpression of HCFC1R1 leads to accumulation of HCFC1 in the cytoplasm. HCFC1R1-mediated export may provide the pool of cytoplasmic HCFC1 required for import of virion-derived VP16 into the nucleus. In Mus musculus (Mouse), this protein is Host cell factor C1 regulator 1 (Hcfc1r1).